The chain runs to 101 residues: Integration host factor subunit beta (101 aa).

The interval 62 to 84 (RNPKTGESVALPGKHVPHFKPGK) is disordered.

The protein belongs to the bacterial histone-like protein family. In terms of assembly, heterodimer of an alpha and a beta chain.

Functionally, this protein is one of the two subunits of integration host factor, a specific DNA-binding protein that functions in genetic recombination as well as in transcriptional and translational control. The polypeptide is Integration host factor subunit beta (Stenotrophomonas maltophilia (strain K279a)).